A 261-amino-acid polypeptide reads, in one-letter code: Synaptophysin-like protein 1 (261 aa).

Topologically, residues 1-33 (MASKANMVRQRFSRLSQRMSAFQINLNPLKEPL) are cytoplasmic. The region spanning 28 to 239 (PLKEPLGFIK…NAWFVYKETS (212 aa)) is the MARVEL domain. A helical transmembrane segment spans residues 34 to 54 (GFIKILEWFASIFAFATCGGF). Over 55–117 (KGKTEIQVNC…LIGDYSSSAQ (63 aa)) the chain is Vesicular. Residues N72 and N95 are each glycosylated (N-linked (GlcNAc...) asparagine). A helical membrane pass occupies residues 118 to 138 (FYVTFAVFVFLYCIAALLLYV). Over 139-151 (GYTNLYRDSRKLP) the chain is Cytoplasmic. The chain crosses the membrane as a helical span at residues 152–172 (MIDFIVTLVATFLWLVSSSAW). Residues 173–214 (AKALTDIKVATGHRIVEELEICNPESGVSCYFVSVTSMGSLN) are Vesicular-facing. N-linked (GlcNAc...) asparagine glycosylation is present at N214. A helical membrane pass occupies residues 215–235 (VSVIFGFLNMILWGGNAWFVY). Residues 236 to 261 (KETSLHSPSNTSASHSQGGGPPTSGM) are Cytoplasmic-facing. A compositionally biased stretch (polar residues) spans 241–251 (HSPSNTSASHS). The disordered stretch occupies residues 241-261 (HSPSNTSASHSQGGGPPTSGM). Residues 252–261 (QGGGPPTSGM) are compositionally biased toward gly residues.

The protein belongs to the synaptophysin/synaptobrevin family. In terms of tissue distribution, ubiquitously expressed.

Its subcellular location is the cytoplasmic vesicle membrane. The protein localises to the melanosome. The sequence is that of Synaptophysin-like protein 1 (Sypl1) from Mus musculus (Mouse).